The sequence spans 554 residues: Laccase-8 (554 aa).

The first 21 residues, 1 to 21 (MASAAMLVPLVLVLCTAAASA), serve as a signal peptide directing secretion. Plastocyanin-like domains lie at 29-145 (KVGG…PRNG) and 156-309 (EEIP…YKGV). Cu cation is bound by residues His79 and His81. N-linked (GlcNAc...) asparagine glycosylation is found at Asn107 and Asn113. Positions 124 and 126 each coordinate Cu cation. Residues Asn271 and Asn369 are each glycosylated (N-linked (GlcNAc...) asparagine). In terms of domain architecture, Plastocyanin-like 3 spans 411–537 (DFPDFPPPMQ…AMVFEVLNGP (127 aa)). Residues His455, His458, His460, His516, Cys517, His518, and His522 each coordinate Cu cation.

Belongs to the multicopper oxidase family. Requires Cu cation as cofactor.

It localises to the secreted. It is found in the extracellular space. Its subcellular location is the apoplast. It catalyses the reaction 4 hydroquinone + O2 = 4 benzosemiquinone + 2 H2O. In terms of biological role, lignin degradation and detoxification of lignin-derived products. In Oryza sativa subsp. japonica (Rice), this protein is Laccase-8 (LAC8).